The chain runs to 605 residues: Apoptosis-inducing factor 3 (605 aa).

Positions Lys22–Thr45 are disordered. One can recognise a Rieske domain in the interval Ala70–Val165. Residues Cys109, His111, Cys128, and His131 each coordinate [2Fe-2S] cluster. FAD-binding positions include Gly201 to Ala205, Arg235, Lys240, Val270, Asp467, and Trp514.

The protein belongs to the FAD-dependent oxidoreductase family. In terms of tissue distribution, ubiquitous. Expressed in bone marrow, cerebral cortex, liver, ovary, thymus, thyroid gland and tongue (at protein level).

It localises to the mitochondrion. Its function is as follows. Induces apoptosis through a caspase dependent pathway. Reduces mitochondrial membrane potential. This chain is Apoptosis-inducing factor 3 (AIFM3), found in Homo sapiens (Human).